The primary structure comprises 339 residues: UDP-N-acetylglucosamine--N-acetylmuramyl-(pentapeptide) pyrophosphoryl-undecaprenol N-acetylglucosamine transferase (339 aa).

Residues 11-13, Asn127, Arg170, Ser188, Ile235, and Gln280 contribute to the UDP-N-acetyl-alpha-D-glucosamine site; that span reads TGG.

Belongs to the glycosyltransferase 28 family. MurG subfamily.

It is found in the cell inner membrane. It catalyses the reaction di-trans,octa-cis-undecaprenyl diphospho-N-acetyl-alpha-D-muramoyl-L-alanyl-D-glutamyl-meso-2,6-diaminopimeloyl-D-alanyl-D-alanine + UDP-N-acetyl-alpha-D-glucosamine = di-trans,octa-cis-undecaprenyl diphospho-[N-acetyl-alpha-D-glucosaminyl-(1-&gt;4)]-N-acetyl-alpha-D-muramoyl-L-alanyl-D-glutamyl-meso-2,6-diaminopimeloyl-D-alanyl-D-alanine + UDP + H(+). Its pathway is cell wall biogenesis; peptidoglycan biosynthesis. Functionally, cell wall formation. Catalyzes the transfer of a GlcNAc subunit on undecaprenyl-pyrophosphoryl-MurNAc-pentapeptide (lipid intermediate I) to form undecaprenyl-pyrophosphoryl-MurNAc-(pentapeptide)GlcNAc (lipid intermediate II). The sequence is that of UDP-N-acetylglucosamine--N-acetylmuramyl-(pentapeptide) pyrophosphoryl-undecaprenol N-acetylglucosamine transferase from Thermotoga maritima (strain ATCC 43589 / DSM 3109 / JCM 10099 / NBRC 100826 / MSB8).